We begin with the raw amino-acid sequence, 201 residues long: MDKFTKLTGVAAPLPIVNIDTDMIIPKDYLKTIKRTGLSKGLFAEMRFNEDGTENPDFVLNKPGYRNAQILVAGDNFGCGSSREHAPWALLDFGIRCVISTSFADIFYNNCFKNGILPIKVAQEDLDKLMDDASRGANATLTVDLEAKEIHGPDGGSISFDVDDFKRHCLLNGLDDIGLTMEKAGSIDTFEAKRAELRPWA.

Belongs to the LeuD family. LeuD type 1 subfamily. As to quaternary structure, heterodimer of LeuC and LeuD.

The enzyme catalyses (2R,3S)-3-isopropylmalate = (2S)-2-isopropylmalate. It functions in the pathway amino-acid biosynthesis; L-leucine biosynthesis; L-leucine from 3-methyl-2-oxobutanoate: step 2/4. Catalyzes the isomerization between 2-isopropylmalate and 3-isopropylmalate, via the formation of 2-isopropylmaleate. The protein is 3-isopropylmalate dehydratase small subunit of Brucella anthropi (strain ATCC 49188 / DSM 6882 / CCUG 24695 / JCM 21032 / LMG 3331 / NBRC 15819 / NCTC 12168 / Alc 37) (Ochrobactrum anthropi).